The chain runs to 830 residues: AdoMet-dependent rRNA methyltransferase SPB1 (830 aa).

Positions 58, 60, 78, 94, and 119 each coordinate S-adenosyl-L-methionine. The active-site Proton acceptor is Lys-159. The stretch at 345–388 (LTEEEQIEKELQEMQQKQNLKKKREKRKQNEIKQKEITRMQMQM) forms a coiled coil. 2 disordered regions span residues 485 to 529 (AKEA…SDSD) and 565 to 642 (EADL…AREV). Composition is skewed to acidic residues over residues 516–529 (VDDD…SDSD), 591–610 (VSEE…DSDF), and 618–630 (DESD…EDEA). A compositionally biased stretch (basic and acidic residues) spans 631–642 (ERSQKEKHAREV).

Belongs to the class I-like SAM-binding methyltransferase superfamily. RNA methyltransferase RlmE family. SPB1 subfamily. In terms of assembly, component of the nucleolar and nucleoplasmic pre-60S ribosomal particle.

The protein localises to the nucleus. It localises to the nucleolus. It catalyses the reaction a ribonucleotide in rRNA + S-adenosyl-L-methionine = a 2'-O-methylribonucleotide in rRNA + S-adenosyl-L-homocysteine + H(+). Required for proper assembly of pre-ribosomal particles during the biogenesis of the 60S ribosomal subunit. This is AdoMet-dependent rRNA methyltransferase SPB1 from Eremothecium gossypii (strain ATCC 10895 / CBS 109.51 / FGSC 9923 / NRRL Y-1056) (Yeast).